A 338-amino-acid chain; its full sequence is Ketol-acid reductoisomerase (NADP(+)) (338 aa).

Positions 1–181 constitute a KARI N-terminal Rossmann domain; the sequence is MKVFYDKDCD…GGGKAGIIET (181 aa). NADP(+) is bound by residues 24-27, Arg47, and Ser52; that span reads YGSQ. His107 is a catalytic residue. Residue Gly133 coordinates NADP(+). Residues 182-327 form the KARI C-terminal knotted domain; sequence NFKEETETDL…AQLRAMMPWI (146 aa). Asp190, Glu194, Glu226, and Glu230 together coordinate Mg(2+). Ser251 serves as a coordination point for substrate.

This sequence belongs to the ketol-acid reductoisomerase family. The cofactor is Mg(2+).

The enzyme catalyses (2R)-2,3-dihydroxy-3-methylbutanoate + NADP(+) = (2S)-2-acetolactate + NADPH + H(+). It catalyses the reaction (2R,3R)-2,3-dihydroxy-3-methylpentanoate + NADP(+) = (S)-2-ethyl-2-hydroxy-3-oxobutanoate + NADPH + H(+). It participates in amino-acid biosynthesis; L-isoleucine biosynthesis; L-isoleucine from 2-oxobutanoate: step 2/4. The protein operates within amino-acid biosynthesis; L-valine biosynthesis; L-valine from pyruvate: step 2/4. Involved in the biosynthesis of branched-chain amino acids (BCAA). Catalyzes an alkyl-migration followed by a ketol-acid reduction of (S)-2-acetolactate (S2AL) to yield (R)-2,3-dihydroxy-isovalerate. In the isomerase reaction, S2AL is rearranged via a Mg-dependent methyl migration to produce 3-hydroxy-3-methyl-2-ketobutyrate (HMKB). In the reductase reaction, this 2-ketoacid undergoes a metal-dependent reduction by NADPH to yield (R)-2,3-dihydroxy-isovalerate. This is Ketol-acid reductoisomerase (NADP(+)) from Paracidovorax citrulli (strain AAC00-1) (Acidovorax citrulli).